A 339-amino-acid chain; its full sequence is DNA-directed RNA polymerase subunit alpha (339 aa).

The tract at residues 1 to 238 (MVDPIVTKNW…EQLSIFINFD (238 aa)) is alpha N-terminal domain (alpha-NTD). An alpha C-terminal domain (alpha-CTD) region spans residues 250-339 (VEEQKLNENL…KAAPQGAPKV (90 aa)).

Belongs to the RNA polymerase alpha chain family. In terms of assembly, homodimer. The RNAP catalytic core consists of 2 alpha, 1 beta, 1 beta' and 1 omega subunit. When a sigma factor is associated with the core the holoenzyme is formed, which can initiate transcription.

It carries out the reaction RNA(n) + a ribonucleoside 5'-triphosphate = RNA(n+1) + diphosphate. DNA-dependent RNA polymerase catalyzes the transcription of DNA into RNA using the four ribonucleoside triphosphates as substrates. In Anaeromyxobacter dehalogenans (strain 2CP-C), this protein is DNA-directed RNA polymerase subunit alpha.